Here is a 213-residue protein sequence, read N- to C-terminus: Thymidylate kinase (213 aa).

10–17 (GLEGAGKT) contacts ATP.

Belongs to the thymidylate kinase family.

It catalyses the reaction dTMP + ATP = dTDP + ADP. Phosphorylation of dTMP to form dTDP in both de novo and salvage pathways of dTTP synthesis. The sequence is that of Thymidylate kinase from Escherichia coli O1:K1 / APEC.